The sequence spans 192 residues: uncharacterized protein (192 aa).

This is an uncharacterized protein from Acanthamoeba polyphaga mimivirus (APMV).